We begin with the raw amino-acid sequence, 310 residues long: Small ribosomal subunit biogenesis GTPase RsgA (310 aa).

The region spanning 77–238 (LSKQSHILAA…IIDTPGIKGF (162 aa)) is the CP-type G domain. GTP-binding positions include 126–129 (NKVD) and 180–188 (GHSGVGKST). Cys262, Cys267, His269, and Cys275 together coordinate Zn(2+).

It belongs to the TRAFAC class YlqF/YawG GTPase family. RsgA subfamily. In terms of assembly, monomer. Associates with 30S ribosomal subunit, binds 16S rRNA. It depends on Zn(2+) as a cofactor.

Its subcellular location is the cytoplasm. Functionally, one of several proteins that assist in the late maturation steps of the functional core of the 30S ribosomal subunit. Helps release RbfA from mature subunits. May play a role in the assembly of ribosomal proteins into the subunit. Circularly permuted GTPase that catalyzes slow GTP hydrolysis, GTPase activity is stimulated by the 30S ribosomal subunit. This Bacteroides fragilis (strain YCH46) protein is Small ribosomal subunit biogenesis GTPase RsgA.